Consider the following 464-residue polypeptide: Uronate isomerase (464 aa).

It belongs to the metallo-dependent hydrolases superfamily. Uronate isomerase family.

The enzyme catalyses D-glucuronate = D-fructuronate. It catalyses the reaction aldehydo-D-galacturonate = keto-D-tagaturonate. Its pathway is carbohydrate metabolism; pentose and glucuronate interconversion. This is Uronate isomerase from Caldicellulosiruptor saccharolyticus (strain ATCC 43494 / DSM 8903 / Tp8T 6331).